A 207-amino-acid polypeptide reads, in one-letter code: Protein MK0488 (207 aa).

An AMMECR1 domain is found at 8-200 (EEGEFLVRLA…EEEPEGPVRE (193 aa)).

In Methanopyrus kandleri (strain AV19 / DSM 6324 / JCM 9639 / NBRC 100938), this protein is Protein MK0488.